The sequence spans 191 residues: Chromobox protein homolog 5 (191 aa).

Serine 11, serine 12, serine 13, and serine 14 each carry phosphoserine. The Chromo 1 domain maps to 20 to 78 (YVVEKVLDRRVVKGQVEYLLKWKGFSEEHNTWEPEKNLDCPELISEFMKKYKKMKEGEN). Residue lysine 32 forms a Glycyl lysine isopeptide (Lys-Gly) (interchain with G-Cter in SUMO2) linkage. Lysine 40 carries the N6-acetyllysine modification. The tract at residues 70 to 117 (YKKMKEGENNKPREKSESNKRKSNFSNSADDIKSKKKREQSNDIARGF) is disordered. Residues 73-89 (MKEGENNKPREKSESNK) are compositionally biased toward basic and acidic residues. Lysine 91 is covalently cross-linked (Glycyl lysine isopeptide (Lys-Gly) (interchain with G-Cter in SUMO2)). Residues serine 92, serine 95, and serine 97 each carry the phosphoserine modification. Residues lysine 102, lysine 106, lysine 154, and lysine 184 each participate in a glycyl lysine isopeptide (Lys-Gly) (interchain with G-Cter in SUMO2) cross-link. Residues 121–179 (LEPEKIIGATDSCGDLMFLMKWKDTDEADLVLAKEANVKCPQIVIAFYEERLTWHAYPE) enclose the Chromo 2; shadow subtype domain.

As to quaternary structure, homodimer. Interacts with histone H3 methylated at 'Lys-9'. Interacts (via Chromo 2; shadow subtype domain) with the MIS12 complex subunit NSL1; the interaction is direct, involves dimeric CBX5, and occurs during interphase. Interacts with POGZ; POGZ and PXVXL motif-containing proteins such as INCENP and TRIM28 compete for interaction with CBX5. Interacts with LRIF1 (via PxVxL motif). Interacts with INCENP. Interacts with TRIM24. Interacts (via the chromoshadow domain) with ATRX; the interaction is direct. Interacts (via the chromoshadow domain) with CHAF1A; the interaction is direct. Interacts (via the chromoshadow domain) with LBR; the interaction is direct. Interacts (via the chromoshadow domain) with NIPBL; the interaction is direct. Interacts (via the chromoshadow domain) with SP100; the interaction is direct. Interacts (via the chromoshadow domain) with STAM2; the interaction is direct. Interacts (via the chromoshadow domain) with TRIM28; the interaction is direct. Interacts (via the chromoshadow domain) with CBX3; the interaction is direct. Interacts with PRR14 (via N-terminus). Interacts with RRP1B. Interacts with HNRNPU (via C-terminus); this interaction is, at least in part, RNA-dependent. Interacts with ZNF263; recruited to the SIX3 promoter along with other proteins involved in chromatin modification and transcriptional corepression where it contributes to transcriptional repression. Interacts with AURKB during mitosis. Interacts with CHAMP1. Interacts with BAHD1. Interacts with HP1BP3. Interacts with CHD3. Interacts with CHD4. Interacts with SMYD5. Interacts with KMT5B. Interacts with KMT5C. In terms of assembly, (Microbial infection) Interacts with JC virus agnoprotein; this interaction induces the dissociation of CBX5 from LBR, resulting in destabilization of the nuclear envelope. Phosphorylation of HP1 and LBR may be responsible for some of the alterations in chromatin organization and nuclear structure which occur at various times during the cell cycle. Phosphorylated during interphase and possibly hyper-phosphorylated during mitosis. Post-translationally, ubiquitinated.

It localises to the nucleus. The protein resides in the chromosome. It is found in the centromere. Functionally, component of heterochromatin that recognizes and binds histone H3 tails methylated at 'Lys-9' (H3K9me), leading to epigenetic repression. In contrast, it is excluded from chromatin when 'Tyr-41' of histone H3 is phosphorylated (H3Y41ph). May contribute to the association of heterochromatin with the inner nuclear membrane by interactions with the lamin-B receptor (LBR). Involved in the formation of kinetochore through interaction with the MIS12 complex subunit NSL1. Required for the formation of the inner centromere. The chain is Chromobox protein homolog 5 (CBX5) from Homo sapiens (Human).